The chain runs to 93 residues: Small ribosomal subunit protein uS19 (93 aa).

The tract at residues 74 to 93 (FSPTRTFRGHVKDDRKSKRR) is disordered. Over residues 83-93 (HVKDDRKSKRR) the composition is skewed to basic and acidic residues.

The protein belongs to the universal ribosomal protein uS19 family.

Its function is as follows. Protein S19 forms a complex with S13 that binds strongly to the 16S ribosomal RNA. The sequence is that of Small ribosomal subunit protein uS19 from Streptomyces griseus subsp. griseus (strain JCM 4626 / CBS 651.72 / NBRC 13350 / KCC S-0626 / ISP 5235).